The following is a 189-amino-acid chain: Ribose 1,5-bisphosphate phosphokinase PhnN (189 aa).

10 to 17 (GPSGSGKD) contacts ATP.

This sequence belongs to the ribose 1,5-bisphosphokinase family.

The catalysed reaction is alpha-D-ribose 1,5-bisphosphate + ATP = 5-phospho-alpha-D-ribose 1-diphosphate + ADP. Its pathway is metabolic intermediate biosynthesis; 5-phospho-alpha-D-ribose 1-diphosphate biosynthesis; 5-phospho-alpha-D-ribose 1-diphosphate from D-ribose 5-phosphate (route II): step 3/3. Its function is as follows. Catalyzes the phosphorylation of ribose 1,5-bisphosphate to 5-phospho-D-ribosyl alpha-1-diphosphate (PRPP). The polypeptide is Ribose 1,5-bisphosphate phosphokinase PhnN (Enterobacter lignolyticus (strain SCF1)).